The following is a 337-amino-acid chain: UDP-3-O-acylglucosamine N-acyltransferase (337 aa).

The Proton acceptor role is filled by H238.

It belongs to the transferase hexapeptide repeat family. LpxD subfamily. As to quaternary structure, homotrimer.

The enzyme catalyses a UDP-3-O-[(3R)-3-hydroxyacyl]-alpha-D-glucosamine + a (3R)-hydroxyacyl-[ACP] = a UDP-2-N,3-O-bis[(3R)-3-hydroxyacyl]-alpha-D-glucosamine + holo-[ACP] + H(+). The protein operates within bacterial outer membrane biogenesis; LPS lipid A biosynthesis. Catalyzes the N-acylation of UDP-3-O-acylglucosamine using 3-hydroxyacyl-ACP as the acyl donor. Is involved in the biosynthesis of lipid A, a phosphorylated glycolipid that anchors the lipopolysaccharide to the outer membrane of the cell. The polypeptide is UDP-3-O-acylglucosamine N-acyltransferase (Xanthomonas campestris pv. campestris (strain 8004)).